A 465-amino-acid chain; its full sequence is MSNKMWGGRFSERPDAIMEEINVSIDVDRHLYAQDIAASKAHAAMLAAQGIVTAKDAKNIAKGLDTILSEIVAGSFDFKRALEDIHMNVESRLSELIGPAAGRLHTARSRNDQVATDFRLFVRDTIDGIDAALASYQHALATRALEHADTVMPGFTHLQTAQPVTFGHHLMAYVEMAARDRGRFRDARKRLNESPLGAAALAGTSFPIDRDATAKALGFERPMANSLDAVSDRDFVLETLAAASIAAVHLSRFAEEIVLWTSPLVGMVRLSDKFTTGSSIMPQKRNPDAAELARAKTGRVIGALTGLLIVMKGLPLAYQKDMQEDKQGAMEAFAALSLAIRAMSGMVSDLVPDPARMKQAAGEGYATATDLADWLVRELKMPFRDAHHVTGRIVGEASKQGVALHELPLAEMQAIEPRITQQALSVLSVESSVKSRVSYGGTAPKNVRAQAKAWLKRLEKEHNSG.

Belongs to the lyase 1 family. Argininosuccinate lyase subfamily.

Its subcellular location is the cytoplasm. The catalysed reaction is 2-(N(omega)-L-arginino)succinate = fumarate + L-arginine. It participates in amino-acid biosynthesis; L-arginine biosynthesis; L-arginine from L-ornithine and carbamoyl phosphate: step 3/3. The chain is Argininosuccinate lyase from Rhodopseudomonas palustris (strain BisB18).